Reading from the N-terminus, the 237-residue chain is Ribonuclease PH (237 aa).

Phosphate is bound by residues arginine 86 and glycine 124–arginine 126.

The protein belongs to the RNase PH family. Homohexameric ring arranged as a trimer of dimers.

The enzyme catalyses tRNA(n+1) + phosphate = tRNA(n) + a ribonucleoside 5'-diphosphate. Phosphorolytic 3'-5' exoribonuclease that plays an important role in tRNA 3'-end maturation. Removes nucleotide residues following the 3'-CCA terminus of tRNAs; can also add nucleotides to the ends of RNA molecules by using nucleoside diphosphates as substrates, but this may not be physiologically important. Probably plays a role in initiation of 16S rRNA degradation (leading to ribosome degradation) during starvation. This Methylobacterium sp. (strain 4-46) protein is Ribonuclease PH.